A 622-amino-acid polypeptide reads, in one-letter code: Chromosomal replication initiator protein DnaA (622 aa).

The interval 1-99 (MADVPADLAA…SAGEPPAPPA (99 aa)) is domain I, interacts with DnaA modulators. Residues 88–282 (DDSAGEPPAP…APGPGEPHAR (195 aa)) are disordered. The interval 100-281 (PPMHQSHQGP…PAPGPGEPHA (182 aa)) is domain II. Composition is skewed to basic and acidic residues over residues 118-137 (QRDD…RPSD) and 176-210 (GYQD…EPWR). Over residues 250-262 (PGGHGPGRTGGSV) the composition is skewed to gly residues. Positions 282-498 (RLNPKYLFDT…GALIRVTAFA (217 aa)) are domain III, AAA+ region. Residues Gly326, Gly328, Lys329, and Thr330 each contribute to the ATP site. A domain IV, binds dsDNA region spans residues 499-622 (SLNRQPVDLG…TELTNRIKNG (124 aa)).

The protein belongs to the DnaA family. As to quaternary structure, oligomerizes as a right-handed, spiral filament on DNA at oriC.

Its subcellular location is the cytoplasm. Functionally, plays an essential role in the initiation and regulation of chromosomal replication. ATP-DnaA binds to the origin of replication (oriC) to initiate formation of the DNA replication initiation complex once per cell cycle. Binds the DnaA box (a 9 base pair repeat at the origin) and separates the double-stranded (ds)DNA. Forms a right-handed helical filament on oriC DNA; dsDNA binds to the exterior of the filament while single-stranded (ss)DNA is stabiized in the filament's interior. The ATP-DnaA-oriC complex binds and stabilizes one strand of the AT-rich DNA unwinding element (DUE), permitting loading of DNA polymerase. After initiation quickly degrades to an ADP-DnaA complex that is not apt for DNA replication. Binds acidic phospholipids. The protein is Chromosomal replication initiator protein DnaA of Streptomyces griseus subsp. griseus (strain JCM 4626 / CBS 651.72 / NBRC 13350 / KCC S-0626 / ISP 5235).